We begin with the raw amino-acid sequence, 203 residues long: ATP-dependent Clp protease proteolytic subunit (203 aa).

Residue serine 107 is the Nucleophile of the active site. Histidine 132 is an active-site residue.

Belongs to the peptidase S14 family. In terms of assembly, fourteen ClpP subunits assemble into 2 heptameric rings which stack back to back to give a disk-like structure with a central cavity, resembling the structure of eukaryotic proteasomes.

Its subcellular location is the cytoplasm. The enzyme catalyses Hydrolysis of proteins to small peptides in the presence of ATP and magnesium. alpha-casein is the usual test substrate. In the absence of ATP, only oligopeptides shorter than five residues are hydrolyzed (such as succinyl-Leu-Tyr-|-NHMec, and Leu-Tyr-Leu-|-Tyr-Trp, in which cleavage of the -Tyr-|-Leu- and -Tyr-|-Trp bonds also occurs).. Functionally, cleaves peptides in various proteins in a process that requires ATP hydrolysis. Has a chymotrypsin-like activity. Plays a major role in the degradation of misfolded proteins. In Shewanella halifaxensis (strain HAW-EB4), this protein is ATP-dependent Clp protease proteolytic subunit.